Here is a 133-residue protein sequence, read N- to C-terminus: IgW chain C region, secreted form 2 (133 aa).

Positions 1–71 (VISGFYPDSV…TGSRFNDRIS (71 aa)) constitute an Ig-like domain. N-linked (GlcNAc...) asparagine glycans are attached at residues Asn32 and Asn112. The secretory tail stretch occupies residues 76–133 (KGGTVNLPVPGGNTPCTCPPSSCSGCMPKLVYQTDLNVTLENGGQLQYNCHQQACKIK).

As to expression, expressed mainly in lymphoid tissues including spleen, epigonal organ and circulating lymphocytes.

It is found in the secreted. In Heterodontus francisci (Horn shark), this protein is IgW chain C region, secreted form 2.